Consider the following 1023-residue polypeptide: uncharacterized protein (1023 aa).

The disordered stretch occupies residues 1–35 (MAEKRPLGPLGPMMYGKLPRLEPDPGPGHSLPLSA). Lysine 17 bears the N6-acetyllysine mark. Residues serine 206 and serine 383 each carry the phosphoserine modification. Disordered regions lie at residues 381–501 (GASP…PVID), 518–551 (PEPR…ASRS), 703–742 (PAPA…PEQH), 907–980 (EART…TLRA), and 1002–1023 (KASG…THHL). At threonine 389 the chain carries Phosphothreonine. Polar residues predominate over residues 391-400 (PSHSQNSVQP). Composition is skewed to basic and acidic residues over residues 425-436 (RPAEKPTPEAQE), 443-454 (CRKEQLQPRPNE), and 477-490 (CAKE…KDAR). Phosphoserine is present on residues serine 493 and serine 494. A compositionally biased stretch (pro residues) spans 706–722 (ASAPPPSPAPAPAPASG). Residues serine 912, serine 964, and serine 972 each carry the phosphoserine modification. The span at 963–972 (PSPSSGASTS) shows a compositional bias: low complexity.

This is an uncharacterized protein from Mus musculus (Mouse).